Reading from the N-terminus, the 82-residue chain is Large ribosomal subunit protein bL31B (82 aa).

Belongs to the bacterial ribosomal protein bL31 family. Type B subfamily. As to quaternary structure, part of the 50S ribosomal subunit.

The chain is Large ribosomal subunit protein bL31B from Proteus mirabilis (strain HI4320).